We begin with the raw amino-acid sequence, 132 residues long: Replication enhancer protein (132 aa).

Belongs to the geminiviridae replication enhancer protein family. In terms of assembly, homooligomer. Interacts with the replication-associated protein (REP). Interacts with host proliferating cell nuclear antigen (PCNA). Interacts with host retinoblastoma-related protein 1 (RBR1), and may thereby deregulate the host cell cycle. Oligomerization and interaction with PCNA are necessary for optimal replication enhancement.

Functionally, increases viral DNA accumulation. Enhances infectivity and symptom expression. The polypeptide is Replication enhancer protein (Potato yellow mosaic virus (isolate Venezuela) (PYMV)).